Reading from the N-terminus, the 506-residue chain is Anaerobic nitric oxide reductase transcription regulator NorR (506 aa).

4-aspartylphosphate is present on D57. Positions M187–V416 constitute a Sigma-54 factor interaction domain. Residues G215–E222 and A278–E287 contribute to the ATP site. A DNA-binding region (H-T-H motif) is located at residues W481–K500.

It participates in nitrogen metabolism; nitric oxide reduction. Functionally, required for the expression of anaerobic nitric oxide (NO) reductase, acts as a transcriptional activator for at least the norVW operon. Activation also requires sigma-54. The chain is Anaerobic nitric oxide reductase transcription regulator NorR from Salmonella heidelberg (strain SL476).